The chain runs to 77 residues: uncharacterized protein (77 aa).

In terms of biological role, putative sugar-binding regulatory protein for the alpha-amylase gene. This is an uncharacterized protein from Streptomyces violaceus (Streptomyces venezuelae).